Here is a 291-residue protein sequence, read N- to C-terminus: Acetylglutamate kinase (291 aa).

Residues 65-66 (GG), Arg-87, and Asn-186 contribute to the substrate site.

The protein belongs to the acetylglutamate kinase family. ArgB subfamily.

It is found in the cytoplasm. The enzyme catalyses N-acetyl-L-glutamate + ATP = N-acetyl-L-glutamyl 5-phosphate + ADP. Its pathway is amino-acid biosynthesis; L-arginine biosynthesis; N(2)-acetyl-L-ornithine from L-glutamate: step 2/4. Catalyzes the ATP-dependent phosphorylation of N-acetyl-L-glutamate. The sequence is that of Acetylglutamate kinase from Mycolicibacterium vanbaalenii (strain DSM 7251 / JCM 13017 / BCRC 16820 / KCTC 9966 / NRRL B-24157 / PYR-1) (Mycobacterium vanbaalenii).